The following is a 343-amino-acid chain: Protein RecA (343 aa).

65–72 (GPESSGKT) contacts ATP.

This sequence belongs to the RecA family.

Its subcellular location is the cytoplasm. Its function is as follows. Can catalyze the hydrolysis of ATP in the presence of single-stranded DNA, the ATP-dependent uptake of single-stranded DNA by duplex DNA, and the ATP-dependent hybridization of homologous single-stranded DNAs. It interacts with LexA causing its activation and leading to its autocatalytic cleavage. In Campylobacter jejuni subsp. doylei (strain ATCC BAA-1458 / RM4099 / 269.97), this protein is Protein RecA.